Consider the following 320-residue polypeptide: Aminoacyl tRNA synthase complex-interacting multifunctional protein 2 (320 aa).

The interaction with PRKN stretch occupies residues 82–162 (TPDADLDVTN…HTHSSVKSVP (81 aa)). The tract at residues 162-225 (PENLLKCFGE…FLFSLFGQKH (64 aa)) is interaction with TP53. Residues 220-317 (LFGQKHNAVN…NLAPFNTALK (98 aa)) enclose the GST C-terminal domain.

Part of the multisynthetase complex (MSC), a multisubunit complex that groups tRNA ligases for Arg (RARS1), Asp (DARS1), Gln (QARS1), Ile (IARS1), Leu (LARS1), Lys (KARS1), Met (MARS1) the bifunctional ligase for Glu and Pro (EPRS1) and the auxiliary subunits AIMP1/p43, AIMP2/p38 and EEF1E1/p18. Interacts (via N-terminus) with KARS1. Interacts with EPRS1. Forms a linear complex that contains MARS1, EEF1E1, EPRS1 and AIMP2 that is at the core of the multisubunit complex. Binds FUBP1 (via C-terminus). Interacts in both its unphosphorylated and phosphorylated forms with p53/TP53 (via N-terminus) in the nucleus following UV irradiation. Interacts (via N-terminus) with PRKN/parkin (via first RING-type domain). Interacts with TARS3. Post-translationally, phosphorylated on serine residues in response to UV irradiation. In terms of processing, ubiquitinated by PRKN, leading to its degradation by the proteasome. Mutant PRKN fails to ubiquitinate AIMP2 efficiently, allowing its accumulation which may contribute to neurodegeneration associated with Parkinson disease.

It is found in the cytoplasm. The protein localises to the cytosol. It localises to the nucleus. Its function is as follows. Required for assembly and stability of the aminoacyl-tRNA synthase complex. Mediates ubiquitination and degradation of FUBP1, a transcriptional activator of MYC, leading to MYC down-regulation which is required for aveolar type II cell differentiation. Blocks MDM2-mediated ubiquitination and degradation of p53/TP53. Functions as a proapoptotic factor. The protein is Aminoacyl tRNA synthase complex-interacting multifunctional protein 2 (AIMP2) of Homo sapiens (Human).